Consider the following 150-residue polypeptide: Kirola (150 aa).

Methionine 1 carries the N-acetylmethionine modification.

Belongs to the MLP family. Monomer. Post-translationally, the N-terminus is blocked.

The sequence is that of Kirola from Actinidia deliciosa (Kiwi).